A 152-amino-acid polypeptide reads, in one-letter code: Transcriptional regulator MraZ (152 aa).

SpoVT-AbrB domains are found at residues 5–52 (ASAV…PLNQ) and 81–124 (ATEC…SESE).

Belongs to the MraZ family. In terms of assembly, forms oligomers.

Its subcellular location is the cytoplasm. The protein resides in the nucleoid. This chain is Transcriptional regulator MraZ, found in Histophilus somni (strain 2336) (Haemophilus somnus).